A 201-amino-acid polypeptide reads, in one-letter code: Adenylyl-sulfate kinase (201 aa).

35–42 provides a ligand contact to ATP; sequence GLSGSGKS. S109 acts as the Phosphoserine intermediate in catalysis.

This sequence belongs to the APS kinase family.

It carries out the reaction adenosine 5'-phosphosulfate + ATP = 3'-phosphoadenylyl sulfate + ADP + H(+). It functions in the pathway sulfur metabolism; hydrogen sulfide biosynthesis; sulfite from sulfate: step 2/3. Its function is as follows. Catalyzes the synthesis of activated sulfate. In Salmonella arizonae (strain ATCC BAA-731 / CDC346-86 / RSK2980), this protein is Adenylyl-sulfate kinase.